Reading from the N-terminus, the 206-residue chain is Riboflavin transporter RibU (206 aa).

6 consecutive transmembrane segments (helical) span residues 7 to 27, 42 to 62, 79 to 99, 113 to 133, 147 to 169, and 173 to 195; these read MVLI…ILQF, IIPV…IILF, WIGV…VWFF, IVLA…FYAL, IFAG…PTYL, and VLPF…VTVF.

Belongs to the prokaryotic riboflavin transporter (P-RFT) (TC 2.A.87) family. In terms of assembly, in E.coli forms a stable energy-coupling factor (ECF) transporter complex composed of 2 membrane-embedded substrate-binding protein (S component), 2 ATP-binding proteins (A and A' components) and 2 transmembrane proteins (T component), probably with a stoichiometry of 2:1:1:2. May be able to interact with more than 1 S component at a time.

The protein localises to the cell membrane. Its function is as follows. Mediates riboflavin uptake, may also transport FMN and roseoflavin. Probably a riboflavin-binding protein that interacts with the energy-coupling factor (ECF) ABC-transporter complex. Unlike classic ABC transporters this ECF transporter provides the energy necessary to transport a number of different substrates. The substrates themselves are bound by transmembrane, not extracytoplasmic soluble proteins. Uptake of riboflavin into proteosomes containing EcfA1A2T and RibU has been demonstrated. Uptake requires hydrolyzable Mg-ATP. This is Riboflavin transporter RibU (ribU) from Lactococcus lactis subsp. cremoris (strain MG1363).